We begin with the raw amino-acid sequence, 374 residues long: DNA/RNA-binding protein ALBA4 (374 aa).

This sequence belongs to the histone-like Alba family.

The protein localises to the cytoplasm. It is found in the cell cortex. Its subcellular location is the perinuclear region. In terms of biological role, possesses DNA- and RNA-binding activities. Binds to DNA with relaxed sequence specificity. May associate with the subtelomeric TARE6 repeats. Regulates the abundance of transcript sub-populations in a stage-specific manner. Regulates activation of male gametocytes. Participates in the coordination of sporozoite development in the oocyst. The sequence is that of DNA/RNA-binding protein ALBA4 from Plasmodium yoelii yoelii.